We begin with the raw amino-acid sequence, 355 residues long: UDP-galactose translocator 1 (355 aa).

Residues 1-36 (MKFQNVHISHQDEDKEKLLPNDKDVEKADESPSSSR) are disordered. Residues 9–30 (SHQDEDKEKLLPNDKDVEKADE) are compositionally biased toward basic and acidic residues. The next 6 membrane-spanning stretches (helical) occupy residues 40-60 (VFKCYVIASMTFIWTAYTLTI), 177-197 (WMAITLLMFGVAFVQMNNVSA), 211-231 (IVGLSAVLATCVTAGFAGVYF), 282-302 (VWAVVILLGVGGLYISLVMRY), 309-329 (SMASAVSIILVVVLSMLIFPD), and 330-350 (IFIGMYFVLGTICVVLAVLLY).

The protein belongs to the nucleotide-sugar transporter family. SLC35A subfamily.

The protein localises to the membrane. It localises to the cytoplasmic granule membrane. The protein is UDP-galactose translocator 1 (ugtp-1) of Caenorhabditis elegans.